A 224-amino-acid chain; its full sequence is Small ribosomal subunit protein uS3 (224 aa).

Residues 38 to 106 enclose the KH type-2 domain; sequence IRKFISKKLK…QVHINIVEIK (69 aa).

This sequence belongs to the universal ribosomal protein uS3 family. As to quaternary structure, part of the 30S ribosomal subunit. Forms a tight complex with proteins S10 and S14.

Its function is as follows. Binds the lower part of the 30S subunit head. Binds mRNA in the 70S ribosome, positioning it for translation. This chain is Small ribosomal subunit protein uS3, found in Lactobacillus helveticus (strain DPC 4571).